Reading from the N-terminus, the 294-residue chain is Extracellular metalloprotease TRV_07111 (294 aa).

Residues 1–19 (MRFSVVFAAIAALSSVVTA) form the signal peptide. Asn49, Asn54, and Asn74 each carry an N-linked (GlcNAc...) asparagine glycan. Residue His185 coordinates Zn(2+). Residue Glu186 is part of the active site. Position 189 (His189) interacts with Zn(2+). A disulfide bridge connects residues Cys224 and Cys250.

It belongs to the peptidase M43B family.

The protein resides in the secreted. In terms of biological role, secreted metalloproteinase that allows assimilation of proteinaceous substrates. Plays a pivotal role as a pathogenicity determinant during infections and contributes to the ability of the pathogen to persist within the mammalian host. This chain is Extracellular metalloprotease TRV_07111, found in Trichophyton verrucosum (strain HKI 0517).